The primary structure comprises 421 residues: Phosphatidate cytidylyltransferase 1 (421 aa).

N-acetylmethionine is present on Met-1. Residues Met-1–Thr-12 show a composition bias toward polar residues. Residues Met-1 to Val-26 form a disordered region. A run of 8 helical transmembrane segments spans residues Ile-60–Val-80, Leu-102–Gly-122, Tyr-149–Leu-169, Trp-183–Phe-203, Ile-206–Phe-226, Gly-246–Gly-266, Leu-321–Phe-341, and Val-369–Val-389.

Belongs to the CDS family. Mg(2+) serves as cofactor.

The protein localises to the membrane. The catalysed reaction is a 1,2-diacyl-sn-glycero-3-phosphate + CTP + H(+) = a CDP-1,2-diacyl-sn-glycerol + diphosphate. Its pathway is phospholipid metabolism; CDP-diacylglycerol biosynthesis; CDP-diacylglycerol from sn-glycerol 3-phosphate: step 3/3. In terms of biological role, may be involved in the synthesis of minor phospholipids and in modulation of IP3-mediated signal transduction. The chain is Phosphatidate cytidylyltransferase 1 from Arabidopsis thaliana (Mouse-ear cress).